The chain runs to 156 residues: 6,7-dimethyl-8-ribityllumazine synthase (156 aa).

5-amino-6-(D-ribitylamino)uracil is bound by residues F22, 57–59, and 81–83; these read AVE and CVI. 86 to 87 lines the (2S)-2-hydroxy-3-oxobutyl phosphate pocket; it reads GT. The active-site Proton donor is the H89. F114 lines the 5-amino-6-(D-ribitylamino)uracil pocket. R128 is a (2S)-2-hydroxy-3-oxobutyl phosphate binding site.

Belongs to the DMRL synthase family. Forms an icosahedral capsid composed of 60 subunits, arranged as a dodecamer of pentamers.

The catalysed reaction is (2S)-2-hydroxy-3-oxobutyl phosphate + 5-amino-6-(D-ribitylamino)uracil = 6,7-dimethyl-8-(1-D-ribityl)lumazine + phosphate + 2 H2O + H(+). The protein operates within cofactor biosynthesis; riboflavin biosynthesis; riboflavin from 2-hydroxy-3-oxobutyl phosphate and 5-amino-6-(D-ribitylamino)uracil: step 1/2. Its function is as follows. Catalyzes the formation of 6,7-dimethyl-8-ribityllumazine by condensation of 5-amino-6-(D-ribitylamino)uracil with 3,4-dihydroxy-2-butanone 4-phosphate. This is the penultimate step in the biosynthesis of riboflavin. In Tolumonas auensis (strain DSM 9187 / NBRC 110442 / TA 4), this protein is 6,7-dimethyl-8-ribityllumazine synthase.